A 43-amino-acid chain; its full sequence is Potassium channel toxin gamma-KTx 4.2 (43 aa).

4 cysteine pairs are disulfide-bonded: cysteine 5–cysteine 23, cysteine 11–cysteine 34, cysteine 20–cysteine 39, and cysteine 24–cysteine 41.

It belongs to the ergtoxin family. Gamma-KTx 4 subfamily. In terms of tissue distribution, expressed by the venom gland.

It localises to the secreted. In terms of biological role, reversibly blocks Kv11/ERG potassium channels. The chain is Potassium channel toxin gamma-KTx 4.2 from Centruroides noxius (Mexican scorpion).